Consider the following 280-residue polypeptide: Probable aquaporin PIP2-8 (280 aa).

Positions 1 to 21 (MAAGSGSGSNPKDYQDPPPAP) are disordered. 2 helical membrane passes run 36–56 (AAIA…STVI) and 70–92 (LGIA…GISG). The NPA 1 motif lies at 96 to 98 (NPA). The next 3 helical transmembrane spans lie at 113-135 (RAAL…ARAM), 156-176 (SAGA…YTVF), and 192-212 (VLAP…TIPI). The short motif at 218 to 220 (NPA) is the NPA 2 element. Residues 236–256 (AWSHLWIFWVGPFAGAAAAMI) form a helical membrane-spanning segment.

Belongs to the MIP/aquaporin (TC 1.A.8) family. PIP (TC 1.A.8.11) subfamily. As to expression, expressed in leaves and at lower levels in roots.

It localises to the cell membrane. Functionally, aquaporins facilitate the transport of water and small neutral solutes across cell membranes. This chain is Probable aquaporin PIP2-8 (PIP2-8), found in Oryza sativa subsp. japonica (Rice).